A 386-amino-acid chain; its full sequence is N-acetylneuraminate epimerase (386 aa).

The signal sequence occupies residues 1 to 29 (MGMQMKNFKKMMTLMALCLSVAITTSGYA). Kelch repeat units follow at residues 51–95 (VIYV…VFLN), 97–149 (ELYV…VKLN), 151–186 (TMVL…KVIY), 187–232 (NYFN…VMEN), 235–284 (LMLI…LAGA), 306–355 (QNYT…SYGD), and 357–386 (VFLI…LLIK). The active-site Proton acceptor is the glutamate 241.

This sequence belongs to the NanM family. As to quaternary structure, homodimer.

Its subcellular location is the periplasm. The enzyme catalyses N-acetyl-alpha-neuraminate = N-acetyl-beta-neuraminate. Converts alpha-N-acetylneuranimic acid (Neu5Ac) to the beta-anomer, accelerating the equilibrium between the alpha- and beta-anomers. Probably facilitates sialidase-negative bacteria to compete successfully for limited amounts of extracellular Neu5Ac, which is likely taken up in the beta-anomer. In addition, the rapid removal of sialic acid from solution might be advantageous to the bacterium to damp down host responses. The protein is N-acetylneuraminate epimerase of Salmonella choleraesuis (strain SC-B67).